Here is a 167-residue protein sequence, read N- to C-terminus: uncharacterized protein (167 aa).

Residues 4–24 traverse the membrane as a helical segment; sequence IIGLFFIIILIVINISILAYD.

The protein resides in the membrane. This is an uncharacterized protein from Rickettsia prowazekii (strain Madrid E).